The sequence spans 1226 residues: Stress response protein nst1 (1226 aa).

Disordered stretches follow at residues 1–225 (MKGN…QEER), 294–388 (ANHP…FNFG), 423–491 (RMAR…RMEE), 526–727 (EELA…KRPA), 757–876 (TPAF…FSNH), and 944–1001 (GKDN…TDQA). Residues 45-59 (PADSAQPSPTITTAA) show a composition bias toward polar residues. The span at 89–99 (NKKKAKRRQKA) shows a compositional bias: basic residues. Polar residues predominate over residues 113–130 (APSNGFPSPSPSHAQQST). The segment covering 131 to 152 (EADHDDSHDEHLEEFNNRRDSR) has biased composition (basic and acidic residues). Over residues 170-180 (KKSKKKKKKSH) the composition is skewed to basic residues. Residues 211 to 225 (ISKEKIWNTSSQEER) show a composition bias toward basic and acidic residues. Polar residues predominate over residues 326-335 (SYPSHHQPSH). Over residues 343–372 (AEEDDEEEEVEEEYSEDEQDEDDYSDDEPS) the composition is skewed to acidic residues. 2 stretches are compositionally biased toward basic and acidic residues: residues 423–432 (RMAREEDARD) and 442–453 (AGDRNAHYHPPA). The segment covering 454 to 484 (DDEVDDEEYDEDYDDDEEEEYDSQDEEETMT) has biased composition (acidic residues). Residues 517-708 (ARERQNMLLE…SKQEDRAAQK (192 aa)) adopt a coiled-coil conformation. 2 stretches are compositionally biased toward basic and acidic residues: residues 530-548 (DEKRRSEERLVKKQKEAQK) and 556-706 (KKEL…DRAA). Composition is skewed to low complexity over residues 707–716 (QKAAALATTA) and 777–790 (SVTTSSGPTSQPGS). Polar residues-rich tracts occupy residues 791–805 (AVSQNPSPHTLTPIL) and 822–852 (SGTQNSGVQLPSPAPSTTVNAGSKPLQSQAN).

Belongs to the NST1 family.

The protein localises to the cytoplasm. May act as a negative regulator of salt tolerance. This is Stress response protein nst1 (nst1) from Neurospora crassa (strain ATCC 24698 / 74-OR23-1A / CBS 708.71 / DSM 1257 / FGSC 987).